The sequence spans 297 residues: MKAPSTSANLGAGFDIVAVAHDAYFAEAYTAVGSGCGVHVKFKGYDPGPENTVTRSFKKFFELTGICRGVEVEVENNIPIARGLGSSGAAAVAALAAFIREAGIKTDPRAVIEAAGYGETAAAGSPHFDNVAGAALGGAVVLTSLSPIDYVKFSPRLIFVVGVPEVPPMPNKTKVMREVLPKSVEFKTYVRQTARVASLIAGLALSDPRLVARGMEDEVVEAARAPYVPGYARVRKYAFEAGALGVSLSGAGPSVIALVNEKEAEAVRDAVLRAYAEEGLRAEVKIASITEGALASL.

79 to 89 contributes to the ATP binding site; it reads PIARGLGSSGA.

It belongs to the GHMP kinase family. Homoserine kinase subfamily.

Its subcellular location is the cytoplasm. The enzyme catalyses L-homoserine + ATP = O-phospho-L-homoserine + ADP + H(+). Its pathway is amino-acid biosynthesis; L-threonine biosynthesis; L-threonine from L-aspartate: step 4/5. Catalyzes the ATP-dependent phosphorylation of L-homoserine to L-homoserine phosphate. The sequence is that of Homoserine kinase from Pyrobaculum aerophilum (strain ATCC 51768 / DSM 7523 / JCM 9630 / CIP 104966 / NBRC 100827 / IM2).